The primary structure comprises 91 residues: UPF0298 protein M28_Spy0318 (91 aa).

Belongs to the UPF0298 family.

The protein resides in the cytoplasm. The polypeptide is UPF0298 protein M28_Spy0318 (Streptococcus pyogenes serotype M28 (strain MGAS6180)).